Consider the following 328-residue polypeptide: Putative potassium channel protein YugO (328 aa).

Transmembrane regions (helical) follow at residues 19-39, 42-62, and 73-93; these read IGVI…ILEP, FTSV…VGYG, and AAGI…FATL. The region spanning 114–238 is the RCK N-terminal domain; sequence RDHIILIGWN…ERAGANQIIG (125 aa).

Its subcellular location is the cell membrane. The protein is Putative potassium channel protein YugO (yugO) of Bacillus subtilis (strain 168).